We begin with the raw amino-acid sequence, 384 residues long: N-acetyldiaminopimelate deacetylase (384 aa).

Residue aspartate 74 is part of the active site. Residue glutamate 133 is the Proton acceptor of the active site.

This sequence belongs to the peptidase M20A family. N-acetyldiaminopimelate deacetylase subfamily.

The catalysed reaction is N-acetyl-(2S,6S)-2,6-diaminopimelate + H2O = (2S,6S)-2,6-diaminopimelate + acetate. The protein operates within amino-acid biosynthesis; L-lysine biosynthesis via DAP pathway; LL-2,6-diaminopimelate from (S)-tetrahydrodipicolinate (acetylase route): step 3/3. Functionally, catalyzes the conversion of N-acetyl-diaminopimelate to diaminopimelate and acetate. This Lactiplantibacillus plantarum (strain ATCC BAA-793 / NCIMB 8826 / WCFS1) (Lactobacillus plantarum) protein is N-acetyldiaminopimelate deacetylase.